The sequence spans 358 residues: Snurportin-1 (358 aa).

Residue Met1 is modified to N-acetylmethionine. Disordered stretches follow at residues 1–26 (MEEL…APHP) and 69–90 (DWTG…MDID). Residues 1–65 (MEELSQALAS…LDYVNHARRL (65 aa)) are necessary for interaction with KPNB1 and m3G-cap U1 and U5 snRNP import receptor activity. A necessary for interaction with XPO1 region spans residues 1-160 (MEELSQALAS…NRFSSLLPGG (160 aa)). Residues 7–22 (ALASSFSVSQELNSTA) show a composition bias toward polar residues. In terms of domain architecture, IBB spans 11-73 (SFSVSQELNS…RLAEDDWTGM (63 aa)). Residue Ser75 is modified to Phosphoserine. An interaction with m3G-cap structure region spans residues 128–130 (GKR). The necessary for binding to the m3G-cap structure stretch occupies residues 210–329 (MHSKLPEEEG…DTKEKLTHKA (120 aa)). The span at 315–341 (KRSQEDTKEKLTHKASENGHYELEHLS) shows a compositional bias: basic and acidic residues. A disordered region spans residues 315–358 (KRSQEDTKEKLTHKASENGHYELEHLSTPKLRNPPHSSESLMDN). The segment covering 349 to 358 (PHSSESLMDN) has biased composition (polar residues). Position 351 is a phosphoserine (Ser351).

Belongs to the snurportin family. As to quaternary structure, component of an import snRNP complex composed of KPNB1, SNUPN, SMN1 and ZNF259. Component of a nuclear export receptor complex composed of KPNB1, Ran, SNUPN and XPO1. Found in a trimeric export complex with SNUPN, Ran and XPO1. Interacts (via IBB domain) with KPNB1; the interaction is direct. Interacts with DDX20, IPO7, SMN1, SNRPB and XPO1. Interacts directly with XPO1. Its interaction with XPO1 and binding to m3G-cap U snRNPs appears to be mutually exclusive. Can form homomers.

It localises to the nucleus. Its subcellular location is the cytoplasm. In terms of biological role, functions as an U snRNP-specific nuclear import adapter. Involved in the trimethylguanosine (m3G)-cap-dependent nuclear import of U snRNPs. Binds specifically to the terminal m3G-cap U snRNAs. The chain is Snurportin-1 (Snupn) from Mus musculus (Mouse).